The following is a 417-amino-acid chain: Glutamate-1-semialdehyde 2,1-aminomutase (417 aa).

An N6-(pyridoxal phosphate)lysine modification is found at K263.

The protein belongs to the class-III pyridoxal-phosphate-dependent aminotransferase family. HemL subfamily. The cofactor is pyridoxal 5'-phosphate.

It localises to the cytoplasm. It carries out the reaction (S)-4-amino-5-oxopentanoate = 5-aminolevulinate. The protein operates within porphyrin-containing compound metabolism; protoporphyrin-IX biosynthesis; 5-aminolevulinate from L-glutamyl-tRNA(Glu): step 2/2. This is Glutamate-1-semialdehyde 2,1-aminomutase from Methanospirillum hungatei JF-1 (strain ATCC 27890 / DSM 864 / NBRC 100397 / JF-1).